The following is a 1235-amino-acid chain: DNA polymerase catalytic subunit (1235 aa).

Disordered stretches follow at residues 640–692 (QGRF…TAGR) and 1098–1134 (ATAPGDEPAPPAALPCPAKRPRETPSHADPPGGASKP). A compositionally biased stretch (basic and acidic residues) spans 650–661 (APKRPAAAREDE). The span at 662-675 (ERPEEEGEDEDERE) shows a compositional bias: acidic residues. Positions 676–691 (EGGGEREPEGARETAG) are enriched in basic and acidic residues.

The protein belongs to the DNA polymerase type-B family. In terms of assembly, forms a complex with the ssDNA-binding protein UL29, the DNA polymerase processivity factor, and the alkaline exonuclease. Interacts with the putative helicase-primase complex subunit UL8; this interaction may coordinate leading and lagging strand DNA synthesis at the replication fork.

The protein localises to the host nucleus. The enzyme catalyses DNA(n) + a 2'-deoxyribonucleoside 5'-triphosphate = DNA(n+1) + diphosphate. It carries out the reaction Endonucleolytic cleavage to 5'-phosphomonoester.. Functionally, replicates viral genomic DNA. The replication complex is composed of six viral proteins: the DNA polymerase, processivity factor, primase, primase-associated factor, helicase, and ssDNA-binding protein. Additionally, the polymerase contains an intrinsic ribonuclease H (RNase H) activity that specifically degrades RNA/DNA heteroduplexes or duplex DNA substrates in the 5' to 3' direction. Therefore, it can catalyze the excision of the RNA primers that initiate the synthesis of Okazaki fragments at a replication fork during viral DNA replication. This is DNA polymerase catalytic subunit from Human herpesvirus 1 (strain Angelotti) (HHV-1).